The sequence spans 63 residues: MPKMKSKSSAAKRFKKTANGFKHRQSFTSHILTKKSTKRKRHLRPKKQVNPSDVPLIKRMLCQ.

2 stretches are compositionally biased toward basic residues: residues 1–25 (MPKM…KHRQ) and 32–47 (LTKK…RPKK). A disordered region spans residues 1–55 (MPKMKSKSSAAKRFKKTANGFKHRQSFTSHILTKKSTKRKRHLRPKKQVNPSDVP).

It belongs to the bacterial ribosomal protein bL35 family.

The protein is Large ribosomal subunit protein bL35 of Hahella chejuensis (strain KCTC 2396).